The chain runs to 100 residues: MIPLQHGLILAAILFVLGLTGLVIRRNLLFMLIGLEIMINASALAFVVAGSYWGQTDGQVMYILAISLAAAEASIGLALLLQLHRRRQNLNIDSVSEMRG.

Transmembrane regions (helical) follow at residues 4–24 (LQHGLILAAILFVLGLTGLVI), 28–48 (LLFMLIGLEIMINASALAFVV), and 60–80 (VMYILAISLAAAEASIGLALL).

Belongs to the complex I subunit 4L family. NDH-1 is composed of 13 different subunits. Subunits NuoA, H, J, K, L, M, N constitute the membrane sector of the complex.

The protein resides in the cell inner membrane. The catalysed reaction is a quinone + NADH + 5 H(+)(in) = a quinol + NAD(+) + 4 H(+)(out). In terms of biological role, NDH-1 shuttles electrons from NADH, via FMN and iron-sulfur (Fe-S) centers, to quinones in the respiratory chain. The immediate electron acceptor for the enzyme in this species is believed to be ubiquinone. Couples the redox reaction to proton translocation (for every two electrons transferred, four hydrogen ions are translocated across the cytoplasmic membrane), and thus conserves the redox energy in a proton gradient. This chain is NADH-quinone oxidoreductase subunit K, found in Citrobacter koseri (strain ATCC BAA-895 / CDC 4225-83 / SGSC4696).